The chain runs to 196 residues: Probable GTP-binding protein EngB (196 aa).

The region spanning 22 to 194 (DKKEIAFAGR…LKTIGEILGD (173 aa)) is the EngB-type G domain. Residues 30-37 (GRSNVGKS), 56-60 (GKTRS), 74-77 (DLPG), 141-144 (TKSD), and 173-175 (FSS) contribute to the GTP site. The Mg(2+) site is built by Ser-37 and Thr-58.

It belongs to the TRAFAC class TrmE-Era-EngA-EngB-Septin-like GTPase superfamily. EngB GTPase family. Mg(2+) serves as cofactor.

Functionally, necessary for normal cell division and for the maintenance of normal septation. The polypeptide is Probable GTP-binding protein EngB (Petrotoga mobilis (strain DSM 10674 / SJ95)).